The chain runs to 87 residues: Small ribosomal subunit protein bS18 (87 aa).

Over residues 1 to 19 (MSTRSRARKRSRVRSRTRR) the composition is skewed to basic residues. Positions 1–25 (MSTRSRARKRSRVRSRTRRKDPIFV) are disordered.

The protein belongs to the bacterial ribosomal protein bS18 family. As to quaternary structure, part of the 30S ribosomal subunit. Forms a tight heterodimer with protein bS6.

Its function is as follows. Binds as a heterodimer with protein bS6 to the central domain of the 16S rRNA, where it helps stabilize the platform of the 30S subunit. The chain is Small ribosomal subunit protein bS18 from Rhodopirellula baltica (strain DSM 10527 / NCIMB 13988 / SH1).